The chain runs to 248 residues: ATP synthase subunit a, chloroplastic (248 aa).

5 helical membrane-spanning segments follow: residues 38-58 (QVLI…AIAV), 96-116 (VPFI…GALL), 135-155 (INTT…AGLT), 200-220 (LVVV…VMFL), and 221-241 (GLFT…AYIG).

Belongs to the ATPase A chain family. As to quaternary structure, F-type ATPases have 2 components, CF(1) - the catalytic core - and CF(0) - the membrane proton channel. CF(1) has five subunits: alpha(3), beta(3), gamma(1), delta(1), epsilon(1). CF(0) has four main subunits: a, b, b' and c.

The protein localises to the plastid. The protein resides in the chloroplast thylakoid membrane. In terms of biological role, key component of the proton channel; it plays a direct role in the translocation of protons across the membrane. The polypeptide is ATP synthase subunit a, chloroplastic (Nuphar advena (Common spatterdock)).